Here is a 283-residue protein sequence, read N- to C-terminus: 4-diphosphocytidyl-2-C-methyl-D-erythritol kinase (283 aa).

Residue Lys13 is part of the active site. Pro96–Ser106 contributes to the ATP binding site. Asp138 is an active-site residue.

The protein belongs to the GHMP kinase family. IspE subfamily.

The enzyme catalyses 4-CDP-2-C-methyl-D-erythritol + ATP = 4-CDP-2-C-methyl-D-erythritol 2-phosphate + ADP + H(+). Its pathway is isoprenoid biosynthesis; isopentenyl diphosphate biosynthesis via DXP pathway; isopentenyl diphosphate from 1-deoxy-D-xylulose 5-phosphate: step 3/6. Catalyzes the phosphorylation of the position 2 hydroxy group of 4-diphosphocytidyl-2C-methyl-D-erythritol. This is 4-diphosphocytidyl-2-C-methyl-D-erythritol kinase from Pseudomonas fluorescens (strain SBW25).